Consider the following 400-residue polypeptide: Ribose-phosphate pyrophosphokinase 2, chloroplastic (400 aa).

A chloroplast-targeting transit peptide spans 1 to 44 (MASLALTSPPSVKIPSYLSSSSSSLFSRSSISFRTTESRSRICV). Mg(2+) is bound by residues D214, H216, D225, and D229. The tract at residues 300–315 (GKVAVMVDDIIDTAGT) is binding of phosphoribosylpyrophosphate.

It belongs to the ribose-phosphate pyrophosphokinase family.

Its subcellular location is the plastid. It is found in the chloroplast. It catalyses the reaction D-ribose 5-phosphate + ATP = 5-phospho-alpha-D-ribose 1-diphosphate + AMP + H(+). This Arabidopsis thaliana (Mouse-ear cress) protein is Ribose-phosphate pyrophosphokinase 2, chloroplastic (PRS2).